Reading from the N-terminus, the 248-residue chain is uncharacterized protein (248 aa).

Residues 33-57 (EWQLSEGQKRCEEINRQNRQLRVEK) are a coiled coil.

This is an uncharacterized protein from Escherichia coli (strain K12).